The sequence spans 701 residues: Polyribonucleotide nucleotidyltransferase (701 aa).

The Mg(2+) site is built by aspartate 485 and aspartate 491. Residues 552–611 (PKIFKTTVDPEKIRDIIGPGGKMINKIIAKTNVKIDIEPDGRIFVAAPDDISGNRAISMI) form the KH domain. One can recognise an S1 motif domain in the interval 621 to 689 (GQFFLGKVTR…RLGRIALSRK (69 aa)).

The protein belongs to the polyribonucleotide nucleotidyltransferase family. Mg(2+) is required as a cofactor.

It is found in the cytoplasm. It catalyses the reaction RNA(n+1) + phosphate = RNA(n) + a ribonucleoside 5'-diphosphate. In terms of biological role, involved in mRNA degradation. Catalyzes the phosphorolysis of single-stranded polyribonucleotides processively in the 3'- to 5'-direction. In Caldicellulosiruptor saccharolyticus (strain ATCC 43494 / DSM 8903 / Tp8T 6331), this protein is Polyribonucleotide nucleotidyltransferase.